A 767-amino-acid chain; its full sequence is Photosystem I P700 chlorophyll a apoprotein A1 (767 aa).

The next 8 helical transmembrane spans lie at Ile72–Ala95, Leu158–His181, Leu197–Leu221, Ile305–Tyr323, Trp364–Tyr387, Ile403–Ile429, Ala451–His473, and Phe548–Leu566. [4Fe-4S] cluster contacts are provided by Cys590 and Cys599. 2 helical membrane passes run His606–Trp627 and Thr681–Phe703. His692 is a chlorophyll a' binding site. Positions 700 and 708 each coordinate chlorophyll a. Trp709 contacts phylloquinone. The chain crosses the membrane as a helical span at residues Ala741 to Ala761.

This sequence belongs to the PsaA/PsaB family. The PsaA/B heterodimer binds the P700 chlorophyll special pair and subsequent electron acceptors. PSI consists of a core antenna complex that captures photons, and an electron transfer chain that converts photonic excitation into a charge separation. The cyanobacterial PSI reaction center is composed of one copy each of PsaA,B,C,D,E,F,I,J,K,L,M and X, and forms trimeric complexes. PSI electron transfer chain: 5 chlorophyll a, 1 chlorophyll a', 2 phylloquinones and 3 4Fe-4S clusters. PSI core antenna: 90 chlorophyll a, 22 carotenoids, 3 phospholipids and 1 galactolipid. P700 is a chlorophyll a/chlorophyll a' dimer, A0 is one or more chlorophyll a, A1 is one or both phylloquinones and FX is a shared 4Fe-4S iron-sulfur center. serves as cofactor.

Its subcellular location is the cellular thylakoid membrane. The enzyme catalyses reduced [plastocyanin] + hnu + oxidized [2Fe-2S]-[ferredoxin] = oxidized [plastocyanin] + reduced [2Fe-2S]-[ferredoxin]. Its function is as follows. PsaA and PsaB bind P700, the primary electron donor of photosystem I (PSI), as well as the electron acceptors A0, A1 and FX. PSI is a plastocyanin/cytochrome c6-ferredoxin oxidoreductase, converting photonic excitation into a charge separation, which transfers an electron from the donor P700 chlorophyll pair to the spectroscopically characterized acceptors A0, A1, FX, FA and FB in turn. Oxidized P700 is reduced on the lumenal side of the thylakoid membrane by plastocyanin or cytochrome c6. This chain is Photosystem I P700 chlorophyll a apoprotein A1, found in Synechococcus sp. (strain WH7803).